A 563-amino-acid chain; its full sequence is Arginine--tRNA ligase (563 aa).

Residues 121 to 131 (PNIAKPFSIGH) carry the 'HIGH' region motif.

Belongs to the class-I aminoacyl-tRNA synthetase family. Monomer.

The protein resides in the cytoplasm. The enzyme catalyses tRNA(Arg) + L-arginine + ATP = L-arginyl-tRNA(Arg) + AMP + diphosphate. The chain is Arginine--tRNA ligase from Streptococcus pneumoniae (strain Taiwan19F-14).